We begin with the raw amino-acid sequence, 71 residues long: Pro-MCH (71 aa).

A signal peptide spans 1-20 (AKMSLSSYILILTLVLFSQG).

It belongs to the melanin-concentrating hormone family.

It localises to the secreted. The sequence is that of Pro-MCH (PMCH) from Carlito syrichta (Philippine tarsier).